Here is a 435-residue protein sequence, read N- to C-terminus: Tol-Pal system protein TolB (435 aa).

The signal sequence occupies residues 1 to 26 (MKIFSPIRLVLAIAALMSVFSAPAFA).

It belongs to the TolB family. The Tol-Pal system is composed of five core proteins: the inner membrane proteins TolA, TolQ and TolR, the periplasmic protein TolB and the outer membrane protein Pal. They form a network linking the inner and outer membranes and the peptidoglycan layer.

The protein resides in the periplasm. Its function is as follows. Part of the Tol-Pal system, which plays a role in outer membrane invagination during cell division and is important for maintaining outer membrane integrity. The polypeptide is Tol-Pal system protein TolB (Agrobacterium fabrum (strain C58 / ATCC 33970) (Agrobacterium tumefaciens (strain C58))).